Here is a 418-residue protein sequence, read N- to C-terminus: 3-isopropylmalate dehydratase large subunit (418 aa).

[4Fe-4S] cluster is bound by residues C298, C358, and C361.

Belongs to the aconitase/IPM isomerase family. LeuC type 2 subfamily. Heterodimer of LeuC and LeuD. [4Fe-4S] cluster serves as cofactor.

It carries out the reaction (2R,3S)-3-isopropylmalate = (2S)-2-isopropylmalate. Its pathway is amino-acid biosynthesis; L-leucine biosynthesis; L-leucine from 3-methyl-2-oxobutanoate: step 2/4. In terms of biological role, catalyzes the isomerization between 2-isopropylmalate and 3-isopropylmalate, via the formation of 2-isopropylmaleate. The chain is 3-isopropylmalate dehydratase large subunit from Caldanaerobacter subterraneus subsp. tengcongensis (strain DSM 15242 / JCM 11007 / NBRC 100824 / MB4) (Thermoanaerobacter tengcongensis).